Reading from the N-terminus, the 928-residue chain is Outer membrane protein SlpA (928 aa).

The N-terminal stretch at 1 to 23 (MKKRLVTLLAGLLTVLSMGFGLA) is a signal peptide. The SLH domain maps to 24–84 (QFSDVPAGHW…QQIEEELKTQ (61 aa)).

Homotrimer.

The protein localises to the cell outer membrane. Plays an important role in the structural organization and integrity of the cell envelope, bridging the outer membrane to the peptidoglyan layer. Appears to be a nonselective channel. The polypeptide is Outer membrane protein SlpA (slpA) (Thermus thermophilus (strain ATCC 27634 / DSM 579 / HB8)).